Here is a 105-residue protein sequence, read N- to C-terminus: MFAVIKAGGKQYKVDRNSIIKVEKIDGELGSKIQFDQVLMIGEYSKPSFIGTPIVKGAVVTAEITNQLKDNKIIVFKKKRRKNYRRKAGHRQELTELKILDITKQ.

It belongs to the bacterial ribosomal protein bL21 family. As to quaternary structure, part of the 50S ribosomal subunit. Contacts protein L20.

This protein binds to 23S rRNA in the presence of protein L20. The protein is Large ribosomal subunit protein bL21 of Rickettsia peacockii (strain Rustic).